The sequence spans 277 residues: Large ribosomal subunit protein uL2 (277 aa).

Positions 199–277 (DHMNTSIGKA…ILLSRHKRKK (79 aa)) are disordered. A compositionally biased stretch (basic residues) spans 209–220 (GRNRWLGRKPHN).

It belongs to the universal ribosomal protein uL2 family. In terms of assembly, part of the 50S ribosomal subunit. Forms a bridge to the 30S subunit in the 70S ribosome.

Its function is as follows. One of the primary rRNA binding proteins. Required for association of the 30S and 50S subunits to form the 70S ribosome, for tRNA binding and peptide bond formation. It has been suggested to have peptidyltransferase activity; this is somewhat controversial. Makes several contacts with the 16S rRNA in the 70S ribosome. In Bradyrhizobium diazoefficiens (strain JCM 10833 / BCRC 13528 / IAM 13628 / NBRC 14792 / USDA 110), this protein is Large ribosomal subunit protein uL2.